We begin with the raw amino-acid sequence, 470 residues long: Small ribosomal subunit protein bS1m (470 aa).

The tract at residues 436–470 (FKKIPMTAARLRGRYENSDSPSSPTMSGSSGYGLR) is disordered. Residues 453 to 464 (SDSPSSPTMSGS) are compositionally biased toward low complexity.

The protein belongs to the bacterial ribosomal protein bS1 family. Component of the mitochondrial small ribosomal subunit (mt-SSU). Mature N.crassa 74S mitochondrial ribosomes consist of a small (37S) and a large (54S) subunit. The 37S small subunit contains a 16S ribosomal RNA (16S mt-rRNA) and 32 different proteins. The 54S large subunit contains a 23S rRNA (23S mt-rRNA) and 42 different proteins.

The protein resides in the mitochondrion. Component of the mitochondrial ribosome (mitoribosome), a dedicated translation machinery responsible for the synthesis of mitochondrial genome-encoded proteins, including at least some of the essential transmembrane subunits of the mitochondrial respiratory chain. The mitoribosomes are attached to the mitochondrial inner membrane and translation products are cotranslationally integrated into the membrane. In Neurospora crassa (strain ATCC 24698 / 74-OR23-1A / CBS 708.71 / DSM 1257 / FGSC 987), this protein is Small ribosomal subunit protein bS1m (mrp51).